A 598-amino-acid chain; its full sequence is UvrABC system protein C (598 aa).

Positions 14–91 (DSPGCYLHKD…IQKNMPKYNI (78 aa)) constitute a GIY-YIG domain. Positions 196 to 231 (DKIIEDLRSKMLAASEEMAFERAAEYRDLISGIATM) constitute a UVR domain.

It belongs to the UvrC family. Interacts with UvrB in an incision complex.

The protein resides in the cytoplasm. Functionally, the UvrABC repair system catalyzes the recognition and processing of DNA lesions. UvrC both incises the 5' and 3' sides of the lesion. The N-terminal half is responsible for the 3' incision and the C-terminal half is responsible for the 5' incision. The polypeptide is UvrABC system protein C (Streptococcus pyogenes serotype M18 (strain MGAS8232)).